Reading from the N-terminus, the 299-residue chain is YjeF N-terminal domain-containing protein 3 (299 aa).

The YjeF N-terminal domain occupies 74 to 287 (AAALERELLE…DVRRKFALRL (214 aa)).

In terms of assembly, interacts with APOA1. Binds to HDL. As to expression, expressed in theca cells in ovary and in Leydig cells in testis (at protein level). Also expressed in brain and mammary gland.

In terms of biological role, may accelerate cholesterol efflux from endothelial cells to high-density lipoprotein (HDL) and thereby regulates angiogenesis. May orchestrate hematopoietic stem and progenitor cell emergence from the hemogenic endothelium, a type of specialized endothelium manifesting hematopoietic potential. YJEFN3-mediated cholesterol efflux activates endothelial SREBF2, the master transcription factor for cholesterol biosynthesis, which in turn transactivates NOTCH and promotes hematopoietic stem and progenitor cell emergence. May play a role in spermiogenesis and oogenesis. This chain is YjeF N-terminal domain-containing protein 3 (YJEFN3), found in Homo sapiens (Human).